We begin with the raw amino-acid sequence, 493 residues long: Probable cytosol aminopeptidase (493 aa).

Lys258 and Asp263 together coordinate Mn(2+). Lys270 is a catalytic residue. Residues Asp281, Asp340, and Glu342 each coordinate Mn(2+). Arg344 is a catalytic residue.

The protein belongs to the peptidase M17 family. It depends on Mn(2+) as a cofactor.

Its subcellular location is the cytoplasm. The enzyme catalyses Release of an N-terminal amino acid, Xaa-|-Yaa-, in which Xaa is preferably Leu, but may be other amino acids including Pro although not Arg or Lys, and Yaa may be Pro. Amino acid amides and methyl esters are also readily hydrolyzed, but rates on arylamides are exceedingly low.. The catalysed reaction is Release of an N-terminal amino acid, preferentially leucine, but not glutamic or aspartic acids.. Functionally, presumably involved in the processing and regular turnover of intracellular proteins. Catalyzes the removal of unsubstituted N-terminal amino acids from various peptides. This Caulobacter vibrioides (strain ATCC 19089 / CIP 103742 / CB 15) (Caulobacter crescentus) protein is Probable cytosol aminopeptidase.